The sequence spans 375 residues: uncharacterized protein (375 aa).

This sequence belongs to the IMPDH/GMPR family.

This is an uncharacterized protein from Mycobacterium leprae (strain TN).